The following is a 441-amino-acid chain: Glutamyl-tRNA reductase (441 aa).

Substrate is bound by residues 49–52 (TCNR), serine 109, 114–116 (EDQ), and glutamine 120. Cysteine 50 serves as the catalytic Nucleophile. NADP(+) is bound at residue 190–195 (GAGKMS).

It belongs to the glutamyl-tRNA reductase family. In terms of assembly, homodimer.

It catalyses the reaction (S)-4-amino-5-oxopentanoate + tRNA(Glu) + NADP(+) = L-glutamyl-tRNA(Glu) + NADPH + H(+). It functions in the pathway porphyrin-containing compound metabolism; protoporphyrin-IX biosynthesis; 5-aminolevulinate from L-glutamyl-tRNA(Glu): step 1/2. Its function is as follows. Catalyzes the NADPH-dependent reduction of glutamyl-tRNA(Glu) to glutamate 1-semialdehyde (GSA). The sequence is that of Glutamyl-tRNA reductase from Moorella thermoacetica (strain ATCC 39073 / JCM 9320).